The following is a 35-amino-acid chain: Coenzyme PQQ synthesis protein A (35 aa).

Residues 16 to 20 (EINMY) constitute a cross-link (pyrroloquinoline quinone (Glu-Tyr)).

It belongs to the PqqA family.

Its pathway is cofactor biosynthesis; pyrroloquinoline quinone biosynthesis. Its function is as follows. Required for coenzyme pyrroloquinoline quinone (PQQ) biosynthesis. PQQ is probably formed by cross-linking a specific glutamate to a specific tyrosine residue and excising these residues from the peptide. The protein is Coenzyme PQQ synthesis protein A of Roseobacter denitrificans (strain ATCC 33942 / OCh 114) (Erythrobacter sp. (strain OCh 114)).